A 375-amino-acid polypeptide reads, in one-letter code: Dual specificity protein phosphatase 4 (375 aa).

The Rhodanese domain occupies 25–143 (SGGRCLLLDC…FASEYPEFCA (119 aa)). One can recognise a Tyrosine-protein phosphatase domain in the interval 176 to 317 (GPVEILPFLY…LLQFESQVLA (142 aa)). Cysteine 261 (phosphocysteine intermediate) is an active-site residue.

It belongs to the protein-tyrosine phosphatase family. Non-receptor class dual specificity subfamily.

The protein resides in the nucleus. The enzyme catalyses O-phospho-L-tyrosyl-[protein] + H2O = L-tyrosyl-[protein] + phosphate. The catalysed reaction is O-phospho-L-seryl-[protein] + H2O = L-seryl-[protein] + phosphate. It catalyses the reaction O-phospho-L-threonyl-[protein] + H2O = L-threonyl-[protein] + phosphate. Its function is as follows. Regulates mitogenic signal transduction by dephosphorylating both Thr and Tyr residues on MAP kinases ERK1 and ERK2. This chain is Dual specificity protein phosphatase 4 (DUSP4), found in Gallus gallus (Chicken).